The primary structure comprises 223 residues: DNA mismatch repair protein MutH (223 aa).

It belongs to the MutH family.

It is found in the cytoplasm. Sequence-specific endonuclease that cleaves unmethylated GATC sequences. It is involved in DNA mismatch repair. The sequence is that of DNA mismatch repair protein MutH from Shewanella sp. (strain MR-7).